The chain runs to 373 residues: Glutamate 5-kinase (373 aa).

An ATP-binding site is contributed by Lys-12. Ser-52, Asp-139, and Asn-154 together coordinate substrate. Position 216–222 (216–222 (TGGMVTK)) interacts with ATP. The region spanning 281-359 (RGNICIDDGA…DEINTVLAGN (79 aa)) is the PUA domain.

It belongs to the glutamate 5-kinase family.

It localises to the cytoplasm. The enzyme catalyses L-glutamate + ATP = L-glutamyl 5-phosphate + ADP. It participates in amino-acid biosynthesis; L-proline biosynthesis; L-glutamate 5-semialdehyde from L-glutamate: step 1/2. Functionally, catalyzes the transfer of a phosphate group to glutamate to form L-glutamate 5-phosphate. The polypeptide is Glutamate 5-kinase (Dehalococcoides mccartyi (strain ATCC BAA-2266 / KCTC 15142 / 195) (Dehalococcoides ethenogenes (strain 195))).